The chain runs to 209 residues: Large ribosomal subunit protein bL25 (209 aa).

This sequence belongs to the bacterial ribosomal protein bL25 family. CTC subfamily. As to quaternary structure, part of the 50S ribosomal subunit; part of the 5S rRNA/L5/L18/L25 subcomplex. Contacts the 5S rRNA. Binds to the 5S rRNA independently of L5 and L18.

Its function is as follows. This is one of the proteins that binds to the 5S RNA in the ribosome where it forms part of the central protuberance. This is Large ribosomal subunit protein bL25 from Xanthomonas campestris pv. campestris (strain 8004).